Consider the following 237-residue polypeptide: CD209 antigen-like protein D (237 aa).

Topologically, residues 1–54 (MSDSMESKTQQVVIPEDEECLMSGTRYSDISSRLQTKFGIKSLAEYTKQSRNPL) are cytoplasmic. Residues 55–75 (VLQLLSFLFLAGLLLIILILV) traverse the membrane as a helical; Signal-anchor for type II membrane protein segment. The Extracellular segment spans residues 76–237 (SKVPSSEVQN…KVSTSSCTTK (162 aa)). The cysteines at positions 106 and 117 are disulfide-linked. One can recognise a C-type lectin domain in the interval 112–227 (FFNGSCYFFS…CDKLLFWICK (116 aa)). N-linked (GlcNAc...) asparagine glycans are attached at residues Asn114 and Asn129. Disulfide bonds link Cys134-Cys226 and Cys205-Cys218. Ca(2+)-binding residues include Glu196, Asn198, Glu203, Asn214, and Asp215.

It localises to the membrane. Functionally, probable pathogen-recognition receptor. May mediate the endocytosis of pathogens which are subsequently degraded in lysosomal compartments. May recognize in a calcium-dependent manner high mannose N-linked oligosaccharides in a variety of pathogen antigens. This chain is CD209 antigen-like protein D (Cd209d), found in Mus musculus (Mouse).